The primary structure comprises 87 residues: Costars family protein (87 aa).

It belongs to the costars family.

The chain is Costars family protein from Oryza sativa subsp. indica (Rice).